Consider the following 354-residue polypeptide: MGFCIPLRSKMLKRGSRKSSSILARRPTPKKMNIVTDLENRLKKNSYIENTNQGNILMDSIFVSTMPVETLFGSYITDDSDDYELKDLLNVTYNIKPVIVPDIKLDAVLDRDGNFRPADCFLVKLKHRDGFTKGALYLGHSAGFTATICLKNEGVSGLYIPGTSVIRSNICQGDTIVSRSSRGVQFLPQIGGEAIFLIVSLCPTKKLVETGFVIPEISSNDNAKIAARILSEKRKDTIAHIDTLIQHRQQLELAYYNSCMLTEFLHYCNSYADTIKESLLKETIQKDINITHTNITTLLNETAKVIKLVKSLVDKEDTDIVNNFITKEIKNCGGVKNRDKIVNSLSLSNLDFRL.

It belongs to the orthopoxvirus OPG055 family.

In terms of biological role, stimulates increases in peripheral microtubule dynamics and may increase the motility of the infected cells, contributing to cell-to-cell spread of the virus. Seems to inhibit the signaling via the GTPase RHOA and DIAPH1/mDia. This is Protein OPG055 (OPG055) from Homo sapiens (Human).